A 187-amino-acid chain; its full sequence is Bis(5'-nucleosyl)-tetraphosphatase, symmetrical (187 aa).

Residues 18-132 (RYQHTIGVME…IFLADYIEPN (115 aa)) enclose the HD domain. An ADP-binding site is contributed by His-21. Fe cation-binding residues include His-21, His-50, and Asp-51. Residues 51–54 (DYAK), His-83, 109–110 (HT), Asp-127, Arg-133, and 170–175 (PIYPDT) contribute to the ADP site. Asp-127 contributes to the Fe cation binding site.

Belongs to the Ap4A hydrolase YqeK family. As to quaternary structure, homodimer.

The catalysed reaction is P(1),P(4)-bis(5'-adenosyl) tetraphosphate + H2O = 2 ADP + 2 H(+). Hydrolyzes diadenosine 5',5'''-P1,P4-tetraphosphate (Ap4A) to yield ADP. The protein is Bis(5'-nucleosyl)-tetraphosphatase, symmetrical of Halalkalibacterium halodurans (strain ATCC BAA-125 / DSM 18197 / FERM 7344 / JCM 9153 / C-125) (Bacillus halodurans).